A 398-amino-acid chain; its full sequence is Queuine tRNA-ribosyltransferase (398 aa).

Aspartate 102 (proton acceptor) is an active-site residue. Substrate is bound by residues 102 to 106 (DSGGF), aspartate 156, glutamine 205, and glycine 232. Positions 263-269 (GVGTPED) are RNA binding. The Nucleophile role is filled by aspartate 282. The tract at residues 287 to 291 (TRNAR) is RNA binding; important for wobble base 34 recognition. Zn(2+) is bound by residues cysteine 320, cysteine 322, cysteine 325, and histidine 362.

This sequence belongs to the queuine tRNA-ribosyltransferase family. Homodimer. Within each dimer, one monomer is responsible for RNA recognition and catalysis, while the other monomer binds to the replacement base PreQ1. The cofactor is Zn(2+).

It carries out the reaction 7-aminomethyl-7-carbaguanine + guanosine(34) in tRNA = 7-aminomethyl-7-carbaguanosine(34) in tRNA + guanine. Its pathway is tRNA modification; tRNA-queuosine biosynthesis. In terms of biological role, catalyzes the base-exchange of a guanine (G) residue with the queuine precursor 7-aminomethyl-7-deazaguanine (PreQ1) at position 34 (anticodon wobble position) in tRNAs with GU(N) anticodons (tRNA-Asp, -Asn, -His and -Tyr). Catalysis occurs through a double-displacement mechanism. The nucleophile active site attacks the C1' of nucleotide 34 to detach the guanine base from the RNA, forming a covalent enzyme-RNA intermediate. The proton acceptor active site deprotonates the incoming PreQ1, allowing a nucleophilic attack on the C1' of the ribose to form the product. After dissociation, two additional enzymatic reactions on the tRNA convert PreQ1 to queuine (Q), resulting in the hypermodified nucleoside queuosine (7-(((4,5-cis-dihydroxy-2-cyclopenten-1-yl)amino)methyl)-7-deazaguanosine). The chain is Queuine tRNA-ribosyltransferase from Polaromonas sp. (strain JS666 / ATCC BAA-500).